The sequence spans 599 residues: Beta-(1--&gt;2)glucan export ATP-binding/permease protein NdvA (599 aa).

One can recognise an ABC transmembrane type-1 domain in the interval 21–301; it reads TITMCVASVL…ISAFINQTVT (281 aa). Helical transmembrane passes span 22 to 42, 55 to 75, 156 to 176, 248 to 268, and 276 to 296; these read ITMC…PVLF, IFSP…AAVF, MRMS…GQLV, MAST…VTKG, and IAFI…SAFI. In terms of domain architecture, ABC transporter spans 335-569; that stretch reads IVFDNVTYEF…GGRFSDLLRA (235 aa). 368-375 contacts ATP; that stretch reads GPTGAGKT.

The protein belongs to the ABC transporter superfamily. Beta-(1--&gt;2)glucan exporter (TC 3.A.1.108.1) family. As to quaternary structure, homodimer.

The protein localises to the cell inner membrane. It carries out the reaction [(1-&gt;2)-beta-D-glucosyl](n)(in) + ATP + H2O = [(1-&gt;2)-beta-D-glucosyl](n)(out) + ADP + phosphate + H(+). Functionally, involved in beta-(1--&gt;2)glucan export. Transmembrane domains (TMD) form a pore in the inner membrane and the ATP-binding domain (NBD) is responsible for energy generation. In Brucella melitensis biotype 1 (strain ATCC 23456 / CCUG 17765 / NCTC 10094 / 16M), this protein is Beta-(1--&gt;2)glucan export ATP-binding/permease protein NdvA.